We begin with the raw amino-acid sequence, 359 residues long: Glycerol-1-phosphate dehydrogenase [NAD(P)+] (359 aa).

Residues 107-111 and 129-132 each bind NAD(+); these read GRVID and TAAS. Asp-134 lines the substrate pocket. Residue Ser-138 coordinates NAD(+). Asp-181 provides a ligand contact to substrate. Zn(2+)-binding residues include Asp-181 and His-261. Substrate is bound at residue His-265. His-277 lines the Zn(2+) pocket.

Belongs to the glycerol-1-phosphate dehydrogenase family. Zn(2+) serves as cofactor.

Its subcellular location is the cytoplasm. It carries out the reaction sn-glycerol 1-phosphate + NAD(+) = dihydroxyacetone phosphate + NADH + H(+). The catalysed reaction is sn-glycerol 1-phosphate + NADP(+) = dihydroxyacetone phosphate + NADPH + H(+). Its pathway is membrane lipid metabolism; glycerophospholipid metabolism. Its function is as follows. Catalyzes the NAD(P)H-dependent reduction of dihydroxyacetonephosphate (DHAP or glycerone phosphate) to glycerol 1-phosphate (G1P). The G1P thus generated is used as the glycerophosphate backbone of phospholipids in the cellular membranes of Archaea. The protein is Glycerol-1-phosphate dehydrogenase [NAD(P)+] of Methanosphaerula palustris (strain ATCC BAA-1556 / DSM 19958 / E1-9c).